The chain runs to 296 residues: Ribosomal protein L11 methyltransferase (296 aa).

Residues threonine 146, glycine 167, aspartate 189, and asparagine 231 each contribute to the S-adenosyl-L-methionine site.

It belongs to the methyltransferase superfamily. PrmA family.

It is found in the cytoplasm. It catalyses the reaction L-lysyl-[protein] + 3 S-adenosyl-L-methionine = N(6),N(6),N(6)-trimethyl-L-lysyl-[protein] + 3 S-adenosyl-L-homocysteine + 3 H(+). Its function is as follows. Methylates ribosomal protein L11. In Haemophilus influenzae (strain ATCC 51907 / DSM 11121 / KW20 / Rd), this protein is Ribosomal protein L11 methyltransferase.